A 350-amino-acid polypeptide reads, in one-letter code: RNA 3'-terminal phosphate cyclase (350 aa).

ATP-binding positions include glutamine 107 and 290–294; that span reads FLGDQ. Histidine 316 serves as the catalytic Tele-AMP-histidine intermediate.

It belongs to the RNA 3'-terminal cyclase family. Type 1 subfamily.

It is found in the cytoplasm. It carries out the reaction a 3'-end 3'-phospho-ribonucleotide-RNA + ATP = a 3'-end 2',3'-cyclophospho-ribonucleotide-RNA + AMP + diphosphate. In terms of biological role, catalyzes the conversion of 3'-phosphate to a 2',3'-cyclic phosphodiester at the end of RNA. The mechanism of action of the enzyme occurs in 3 steps: (A) adenylation of the enzyme by ATP; (B) transfer of adenylate to an RNA-N3'P to produce RNA-N3'PP5'A; (C) and attack of the adjacent 2'-hydroxyl on the 3'-phosphorus in the diester linkage to produce the cyclic end product. The biological role of this enzyme is unknown but it is likely to function in some aspects of cellular RNA processing. The sequence is that of RNA 3'-terminal phosphate cyclase from Gloeothece citriformis (strain PCC 7424) (Cyanothece sp. (strain PCC 7424)).